Reading from the N-terminus, the 378-residue chain is MASQSQVLVEEKSSVRILTLNRPKQLNALCFNMISRLLQLFRAYEEDPSVKLVILKGQGRAFCAGGDVPPVVQNMVQGKWRLGADFFRDQYTLNYVMATYSKPQVSILNGIVMGAGAGVSIHGRFRIATENTVFAMPETSLGLFPDVGASYFLSRLPGFFGEYVGLTGARLDGAELLACGLATHFVPSTRLTALETDLCKVGSSDPSFVSTILDAYTQHPHLKQKSAYHRLDVIDRCFSKRTMEEIISALERETTQELDDWSLTTIRALKKSSPSSLKISLRSIREGRLQGVGHCLTREYRMVCHVMKGDLSKDLVEGCRAILIDKDRNPKWEPRRLEDMKDSMVDQFFERVEEEERWEDLKLSPRNNLHALRIAAKL.

Substrate-binding residues include glutamate 138 and aspartate 146.

The protein belongs to the enoyl-CoA hydratase/isomerase family.

The protein resides in the peroxisome. It catalyses the reaction 3-hydroxy-2-methylpropanoyl-CoA + H2O = 3-hydroxy-2-methylpropanoate + CoA + H(+). Its pathway is amino-acid degradation; L-valine degradation. Its function is as follows. Involved in valine catabolism. The polypeptide is Probable 3-hydroxyisobutyryl-CoA hydrolase 3 (Arabidopsis thaliana (Mouse-ear cress)).